The following is a 216-amino-acid chain: Protein Syd (216 aa).

Belongs to the Syd family.

It localises to the cell inner membrane. Its function is as follows. Interacts with the SecY protein in vivo. May bind preferentially to an uncomplexed state of SecY, thus functioning either as a chelating agent for excess SecY in the cell or as a regulatory factor that negatively controls the translocase function. The protein is Protein Syd of Shewanella sp. (strain ANA-3).